Consider the following 887-residue polypeptide: Tubulin polyglutamylase TTLL7 (887 aa).

Residues 1–21 (MPSLPQEGVIQGPSPLDLNTE) are disordered. The 353-residue stretch at 38-390 (KGTITANVAG…RTSDKRRNLA (353 aa)) folds into the TTL domain. ATP is bound by residues Lys160, 166–167 (MG), 188–191 (QEYI), and 201–203 (KFD). Arg227 contacts L-glutamate. 249–250 (TN) lines the ATP pocket. Positions 251, 252, and 271 each coordinate L-glutamate. Positions 336, 349, and 351 each coordinate Mg(2+). Lys367 contacts L-glutamate. Residues 388–450 (NLAKQKAEAQ…ISREEHENRH (63 aa)) are c-MTBD region. Disordered regions lie at residues 519–621 (MGKT…TRPF) and 651–676 (LPHSNDACSTNSQVSESLRQLKTKEQ). Positions 548–560 (SSDSSYDSSSSSS) are enriched in low complexity. Composition is skewed to polar residues over residues 593–621 (QQPSSIRRSVSCPRSISAQSPSSGDTRPF) and 656–670 (DACSTNSQVSESLRQ).

The protein belongs to the tubulin--tyrosine ligase family. As to quaternary structure, interacts with both alpha- and beta-tubulin (via C-terminal tubulin tails). Requires Mg(2+) as cofactor. As to expression, highly expressed in the nervous system including spinal cord, thalamus, hippocampus, hypothalamus and cerebellum.

It is found in the cell projection. The protein resides in the cilium. Its subcellular location is the cytoplasm. The protein localises to the cytoskeleton. It localises to the cilium basal body. It is found in the dendrite. The protein resides in the perikaryon. It carries out the reaction L-glutamyl-[protein] + L-glutamate + ATP = gamma-L-glutamyl-L-glutamyl-[protein] + ADP + phosphate + H(+). The enzyme catalyses (L-glutamyl)(n)-gamma-L-glutamyl-L-glutamyl-[protein] + L-glutamate + ATP = (L-glutamyl)(n+1)-gamma-L-glutamyl-L-glutamyl-[protein] + ADP + phosphate + H(+). Its function is as follows. Polyglutamylase which modifies tubulin, generating polyglutamate side chains of variable lengths on the gamma-carboxyl group of specific glutamate residues within the C-terminal tail of tubulin. Mediates both ATP-dependent initiation and elongation steps of the polyglutamylation reaction. Preferentially modifies the beta-tubulin tail over an alpha-tail. Competes with monoglycylase TTLL3 for modification site on beta-tubulin substrate, thereby creating an anticorrelation between glycylation and glutamylation reactions. Required for neurite growth; responsible for the strong increase in tubulin polyglutamylation during postnatal neuronal maturation. The protein is Tubulin polyglutamylase TTLL7 of Homo sapiens (Human).